The chain runs to 124 residues: UPF0102 protein MSMEG_2508/MSMEI_2448 (124 aa).

Belongs to the UPF0102 family.

The polypeptide is UPF0102 protein MSMEG_2508/MSMEI_2448 (Mycolicibacterium smegmatis (strain ATCC 700084 / mc(2)155) (Mycobacterium smegmatis)).